The chain runs to 230 residues: ATP phosphoribosyltransferase (230 aa).

This sequence belongs to the ATP phosphoribosyltransferase family. Short subfamily. Heteromultimer composed of HisG and HisZ subunits.

The protein localises to the cytoplasm. The enzyme catalyses 1-(5-phospho-beta-D-ribosyl)-ATP + diphosphate = 5-phospho-alpha-D-ribose 1-diphosphate + ATP. It functions in the pathway amino-acid biosynthesis; L-histidine biosynthesis; L-histidine from 5-phospho-alpha-D-ribose 1-diphosphate: step 1/9. Catalyzes the condensation of ATP and 5-phosphoribose 1-diphosphate to form N'-(5'-phosphoribosyl)-ATP (PR-ATP). Has a crucial role in the pathway because the rate of histidine biosynthesis seems to be controlled primarily by regulation of HisG enzymatic activity. The polypeptide is ATP phosphoribosyltransferase (Agrobacterium fabrum (strain C58 / ATCC 33970) (Agrobacterium tumefaciens (strain C58))).